Here is a 198-residue protein sequence, read N- to C-terminus: Probable nicotinate-nucleotide adenylyltransferase (198 aa).

Belongs to the NadD family.

The catalysed reaction is nicotinate beta-D-ribonucleotide + ATP + H(+) = deamido-NAD(+) + diphosphate. The protein operates within cofactor biosynthesis; NAD(+) biosynthesis; deamido-NAD(+) from nicotinate D-ribonucleotide: step 1/1. Its function is as follows. Catalyzes the reversible adenylation of nicotinate mononucleotide (NaMN) to nicotinic acid adenine dinucleotide (NaAD). This Chlorobium limicola (strain DSM 245 / NBRC 103803 / 6330) protein is Probable nicotinate-nucleotide adenylyltransferase.